Reading from the N-terminus, the 449-residue chain is Xylose isomerase (449 aa).

Catalysis depends on residues His103 and Asp106. Mg(2+) is bound by residues Glu234, Glu270, His273, Asp298, Asp309, Asp311, and Asp342.

Belongs to the xylose isomerase family. In terms of assembly, homotetramer. Requires Mg(2+) as cofactor.

It localises to the cytoplasm. It catalyses the reaction alpha-D-xylose = alpha-D-xylulofuranose. The chain is Xylose isomerase from Levilactobacillus brevis (Lactobacillus brevis).